A 111-amino-acid polypeptide reads, in one-letter code: Universal stress protein B (111 aa).

The next 2 helical transmembrane spans lie at 1–21 (MIST…NMAR) and 90–110 (FILT…LILW).

The protein belongs to the universal stress protein B family.

It localises to the cell inner membrane. This Yersinia enterocolitica serotype O:8 / biotype 1B (strain NCTC 13174 / 8081) protein is Universal stress protein B.